The sequence spans 653 residues: Threonine--tRNA ligase (653 aa).

In terms of domain architecture, TGS spans 1 to 61 (MIKITFPDGN…NEDAEVKLFK (61 aa)). The catalytic stretch occupies residues 243-542 (DHRKIGKELE…LIEHTAGKFP (300 aa)). Residues C338, H389, and H519 each coordinate Zn(2+).

It belongs to the class-II aminoacyl-tRNA synthetase family. As to quaternary structure, homodimer. Zn(2+) serves as cofactor.

It localises to the cytoplasm. The catalysed reaction is tRNA(Thr) + L-threonine + ATP = L-threonyl-tRNA(Thr) + AMP + diphosphate + H(+). Catalyzes the attachment of threonine to tRNA(Thr) in a two-step reaction: L-threonine is first activated by ATP to form Thr-AMP and then transferred to the acceptor end of tRNA(Thr). Also edits incorrectly charged L-seryl-tRNA(Thr). The polypeptide is Threonine--tRNA ligase (Porphyromonas gingivalis (strain ATCC 33277 / DSM 20709 / CIP 103683 / JCM 12257 / NCTC 11834 / 2561)).